A 209-amino-acid chain; its full sequence is MSKSWRELTIAFAGIVLATKQVAQLAKTGYLKTDEFETSVRSLFERNPASTEATYGSGHNLAEAFEELEKLLNNHRDPRNADLLRYVLGVLHLQKKLIKRKEMLYVIGNRLEKAETQAQHFGITHDNVISNIAEIYTDTLSKFPYRIQVTGEATYLQQTRVASQIRVLLLAAIRSATLWRQLGGSRWQLLLYRNQMAKHTHELYLEFKR.

This sequence belongs to the HflD family.

Its subcellular location is the cytoplasm. It localises to the cell inner membrane. The polypeptide is High frequency lysogenization protein HflD homolog (Saccharophagus degradans (strain 2-40 / ATCC 43961 / DSM 17024)).